Consider the following 202-residue polypeptide: Peptide deformylase 2 (202 aa).

2 residues coordinate Fe cation: C120 and H162. E163 is a catalytic residue. Fe cation is bound at residue H166.

Belongs to the polypeptide deformylase family. The cofactor is Fe(2+).

It carries out the reaction N-terminal N-formyl-L-methionyl-[peptide] + H2O = N-terminal L-methionyl-[peptide] + formate. Its function is as follows. Removes the formyl group from the N-terminal Met of newly synthesized proteins. Requires at least a dipeptide for an efficient rate of reaction. N-terminal L-methionine is a prerequisite for activity but the enzyme has broad specificity at other positions. This chain is Peptide deformylase 2, found in Rickettsia conorii (strain ATCC VR-613 / Malish 7).